Consider the following 167-residue polypeptide: Phospholipase A2 heteromtoxin (167 aa).

3 residues coordinate Ca(2+): Trp38, Gly40, and Gly42. Disulfide bonds link Cys39-Cys61, Cys60-Cys99, Cys67-Cys92, Cys90-Cys127, and Cys132-Cys144. His64 is a catalytic residue. Asp65 is a Ca(2+) binding site. Residues 136–140 constitute a propeptide that is removed on maturation; the sequence is GRSAR.

Belongs to the phospholipase A2 family. Group III subfamily. Heterodimer composed of a large and a small subunits; disulfide-linked. Requires Ca(2+) as cofactor. Expressed by the venom gland.

It is found in the secreted. It catalyses the reaction a 1,2-diacyl-sn-glycero-3-phosphocholine + H2O = a 1-acyl-sn-glycero-3-phosphocholine + a fatty acid + H(+). Functionally, phospholipase toxin, which catalyzes the calcium-dependent hydrolysis of the 2-acyl groups in 3-sn-phosphoglycerides. Inhibits both skeletal (RYR1) and cardiac (RYR2) ryanodine receptors (calcium release channels). Probably blocks ryanodine receptors by generating a lipid product. The sequence is that of Phospholipase A2 heteromtoxin from Heterometrus laoticus (Thai giant scorpion).